A 212-amino-acid chain; its full sequence is Major fimbrial subunit (212 aa).

An N-terminal signal peptide occupies residues 1–18 (MKKTLLGSLILLAFATNA). Cys42 and Cys82 form a disulfide bridge.

It belongs to the fimbrial protein family.

It localises to the fimbrium. Its function is as follows. Mediates adherence to oropharyngeal epithelial cells. Helps the airway colonization process. The polypeptide is Major fimbrial subunit (hifA) (Haemophilus influenzae).